The primary structure comprises 174 residues: Guided entry of tail-anchored proteins factor 1 (174 aa).

Residues 1–8 (MSSAAADH) lie on the Lumenal side of the membrane. A helical membrane pass occupies residues 9–29 (WAWLLVLSFVFGCNVLRVLLP). The Cytoplasmic portion of the chain corresponds to 30 to 99 (SFSSFMSRVL…VKARTAQLAK (70 aa)). A coiled-coil region spans residues 39–94 (LQKDAEQESQMRAEIQDMKQELSTVNMMDEFARYARLERKINKMTDKLKTHVKART). The interval 39-97 (LQKDAEQESQMRAEIQDMKQELSTVNMMDEFARYARLERKINKMTDKLKTHVKARTAQL) is interaction with GET3/TRC40. Residues 100-120 (IKWVISVAFYVLQAALMISLI) traverse the membrane as a helical segment. At 121-148 (WKYYSVPVAVVPSKWITPLDRLVAFPTR) the chain is on the lumenal side. A helical transmembrane segment spans residues 149–169 (VAGGVGITCWILVCNKVVAIV). The Cytoplasmic segment spans residues 170–174 (LHPFS).

The protein belongs to the WRB/GET1 family. In terms of assembly, component of the Golgi to ER traffic (GET) complex, which is composed of GET1/WRB, CAMLG/GET2 and GET3. Within the complex, GET1 and CAMLG form a heterotetramer which is stabilized by phosphatidylinositol binding and which binds to the GET3 homodimer. Interacts with CAMLG (via C-terminus). GET3 shows a higher affinity for CAMLG than for GET1.

Its subcellular location is the endoplasmic reticulum membrane. In terms of biological role, required for the post-translational delivery of tail-anchored (TA) proteins to the endoplasmic reticulum. Together with CAMLG/GET2, acts as a membrane receptor for soluble GET3/TRC40, which recognizes and selectively binds the transmembrane domain of TA proteins in the cytosol. Required to ensure correct topology and ER insertion of CAMLG. In Pongo abelii (Sumatran orangutan), this protein is Guided entry of tail-anchored proteins factor 1.